Consider the following 337-residue polypeptide: D-alanine--D-alanine ligase (337 aa).

The 207-residue stretch at 124 to 330 (KMWFSALGIP…FTEYLSLVIN (207 aa)) folds into the ATP-grasp domain. 154 to 209 (ALAQWGSIFVKAASQGSSVGCYKVDDSDKVAGVLKDAFGYAPYVIVEKTIKARELE) lines the ATP pocket. Mg(2+) contacts are provided by Asp284, Glu297, and Asn299.

It belongs to the D-alanine--D-alanine ligase family. Mg(2+) is required as a cofactor. Requires Mn(2+) as cofactor.

The protein resides in the cytoplasm. The catalysed reaction is 2 D-alanine + ATP = D-alanyl-D-alanine + ADP + phosphate + H(+). It functions in the pathway cell wall biogenesis; peptidoglycan biosynthesis. Its function is as follows. Cell wall formation. The protein is D-alanine--D-alanine ligase of Shewanella baltica (strain OS195).